The chain runs to 421 residues: D-amino acid dehydrogenase (421 aa).

An FAD-binding site is contributed by 3–17 (VLILGSGVIGVTSAY).

It belongs to the DadA oxidoreductase family. Requires FAD as cofactor.

It carries out the reaction a D-alpha-amino acid + A + H2O = a 2-oxocarboxylate + AH2 + NH4(+). Oxidative deamination of D-amino acids. This chain is D-amino acid dehydrogenase, found in Bradyrhizobium diazoefficiens (strain JCM 10833 / BCRC 13528 / IAM 13628 / NBRC 14792 / USDA 110).